The chain runs to 178 residues: Mediator of RNA polymerase II transcription subunit 28 (178 aa).

A disordered region spans residues 1-25; sequence MAAPLGGMFSGQQPGPPQPPPGLLG. A coiled-coil region spans residues 109 to 145; it reads QVIKEDVSELRNELQRKDALVQKHLTKLRHWQQVLED.

This sequence belongs to the Mediator complex subunit 28 family. Component of the Mediator complex, which is composed of MED1, MED4, MED6, MED7, MED8, MED9, MED10, MED11, MED12, MED13, MED13L, MED14, MED15, MED16, MED17, MED18, MED19, MED20, MED21, MED22, MED23, MED24, MED25, MED26, MED27, MED29, MED30, MED31, CCNC, CDK8 and CDC2L6/CDK11. The MED12, MED13, CCNC and CDK8 subunits form a distinct module termed the CDK8 module. Mediator containing the CDK8 module is less active than Mediator lacking this module in supporting transcriptional activation. Individual preparations of the Mediator complex lacking one or more distinct subunits have been variously termed ARC, CRSP, DRIP, PC2, SMCC and TRAP. Forms a ternary complex with NF2/merlin and GRB2. Binds to actin.

Its subcellular location is the nucleus. The protein resides in the cytoplasm. The protein localises to the membrane. Component of the Mediator complex, a coactivator involved in the regulated transcription of nearly all RNA polymerase II-dependent genes. Mediator functions as a bridge to convey information from gene-specific regulatory proteins to the basal RNA polymerase II transcription machinery. Mediator is recruited to promoters by direct interactions with regulatory proteins and serves as a scaffold for the assembly of a functional preinitiation complex with RNA polymerase II and the general transcription factors. May be part of a complex containing NF2/merlin that participates in cellular signaling to the actin cytoskeleton downstream of tyrosine kinase signaling pathways. This chain is Mediator of RNA polymerase II transcription subunit 28 (MED28), found in Bos taurus (Bovine).